Consider the following 148-residue polypeptide: Lysozyme C, milk isozyme (148 aa).

The first 18 residues, 1–18, serve as a signal peptide directing secretion; that stretch reads MKALLIVGLLLLSVAVQG. The C-type lysozyme domain maps to 19–148; the sequence is KKFQRCELAR…LRSYVQGCRV (130 aa). Intrachain disulfides connect Cys-24/Cys-146, Cys-48/Cys-134, Cys-83/Cys-99, and Cys-95/Cys-113. Catalysis depends on residues Glu-53 and Asp-71.

It belongs to the glycosyl hydrolase 22 family.

It carries out the reaction Hydrolysis of (1-&gt;4)-beta-linkages between N-acetylmuramic acid and N-acetyl-D-glucosamine residues in a peptidoglycan and between N-acetyl-D-glucosamine residues in chitodextrins.. Its function is as follows. Lysozymes have primarily a bacteriolytic function; those in tissues and body fluids are associated with the monocyte-macrophage system and enhance the activity of immunoagents. This Bos taurus (Bovine) protein is Lysozyme C, milk isozyme.